The following is a 267-amino-acid chain: Undecaprenyl-diphosphatase (267 aa).

A run of 7 helical transmembrane segments spans residues 7-29 (LILGIIEGLTEFLPVSSTGHMIL), 41-61 (FWKSFLIIIQLGSILAVIFVF), 69-89 (LDIWLKLAAGFFPTGVIGLFV), 96-116 (LFNGWVVVGMLIFGGVVFILI), 173-193 (AAEFSFLLAIPTMIIATAYSI), 207-227 (IPLGIGFITAFVVAVLVIKFF), and 239-259 (FGIYRIILGFVFFYLYYSGIL).

This sequence belongs to the UppP family.

The protein resides in the cell inner membrane. It catalyses the reaction di-trans,octa-cis-undecaprenyl diphosphate + H2O = di-trans,octa-cis-undecaprenyl phosphate + phosphate + H(+). Catalyzes the dephosphorylation of undecaprenyl diphosphate (UPP). Confers resistance to bacitracin. The sequence is that of Undecaprenyl-diphosphatase from Campylobacter jejuni subsp. jejuni serotype O:6 (strain 81116 / NCTC 11828).